The primary structure comprises 407 residues: Substance-P receptor (407 aa).

At 1–31 (MDNVLPVDSDLFPNISTNTSEPNQFVQPAWQ) the chain is on the extracellular side. Residues N14 and N18 are each glycosylated (N-linked (GlcNAc...) asparagine). The chain crosses the membrane as a helical span at residues 32 to 54 (IVLWAAAYTVIVVTSVVGNVVVM). Residues 55-64 (WIILAHKRMR) lie on the Cytoplasmic side of the membrane. The helical transmembrane segment at 65–86 (TVTNYFLVNLAFAEASMAAFNT) threads the bilayer. The Extracellular portion of the chain corresponds to 87–106 (VVNFTYAVHNEWYYGLFYCK). A disulfide bridge connects residues C105 and C180. A helical transmembrane segment spans residues 107–128 (FHNFFPIAAVFASIYSMTAVAF). At 129 to 148 (DRYMAIIHPLQPRLSATATK) the chain is on the cytoplasmic side. The helical transmembrane segment at 149-169 (VVICVIWVLALLLAFPQGYYS) threads the bilayer. Over 170 to 194 (TTETMPGRVVCMIEWPSHPDKIYEK) the chain is Extracellular. Residues 195-219 (VYHICVTVLIYFLPLLVIGYAYTVV) traverse the membrane as a helical segment. Residues 220 to 248 (GITLWASEIPGDSSDRYHEQVSAKRKVVK) are Cytoplasmic-facing. A helical membrane pass occupies residues 249–270 (MMIVVVCTFAICWLPFHIFFLL). The Extracellular segment spans residues 271–283 (PYINPDLYLKKFI). Residues 284–308 (QQVYLAIMWLAMSSTMYNPIIYCCL) traverse the membrane as a helical segment. The Cytoplasmic segment spans residues 309–407 (NDRFRLGFKH…SSSFYSNMLS (99 aa)). C322 carries the S-palmitoyl cysteine lipid modification. Residues 363–407 (GAHEEDPEEGPKATPSSLDLTSNGSSRSNSKTVTESSSFYSNMLS) form a disordered region. Residues 376 to 407 (TPSSLDLTSNGSSRSNSKTVTESSSFYSNMLS) are compositionally biased toward polar residues.

This sequence belongs to the G-protein coupled receptor 1 family. As to quaternary structure, interacts with ARRB1.

Its subcellular location is the cell membrane. Its function is as follows. This is a receptor for the tachykinin neuropeptide substance P. It is probably associated with G proteins that activate a phosphatidylinositol-calcium second messenger system. The rank order of affinity of this receptor to tachykinins is: substance P &gt; substance K &gt; neuromedin-K. In Cavia porcellus (Guinea pig), this protein is Substance-P receptor (TACR1).